The following is a 234-amino-acid chain: Phosphoribosylaminoimidazole-succinocarboxamide synthase (234 aa).

The protein belongs to the SAICAR synthetase family.

The enzyme catalyses 5-amino-1-(5-phospho-D-ribosyl)imidazole-4-carboxylate + L-aspartate + ATP = (2S)-2-[5-amino-1-(5-phospho-beta-D-ribosyl)imidazole-4-carboxamido]succinate + ADP + phosphate + 2 H(+). It participates in purine metabolism; IMP biosynthesis via de novo pathway; 5-amino-1-(5-phospho-D-ribosyl)imidazole-4-carboxamide from 5-amino-1-(5-phospho-D-ribosyl)imidazole-4-carboxylate: step 1/2. This Exiguobacterium sp. (strain ATCC BAA-1283 / AT1b) protein is Phosphoribosylaminoimidazole-succinocarboxamide synthase.